The primary structure comprises 540 residues: Aquaporin-5 (540 aa).

The tract at residues Met-1 to Ser-224 is disordered. Residues Met-1–His-263 lie on the Cytoplasmic side of the membrane. The segment covering Pro-25 to Lys-44 has biased composition (polar residues). 4 stretches are compositionally biased toward basic and acidic residues: residues Arg-119–Asn-133, Arg-140–Arg-155, Tyr-174–Arg-194, and Ser-204–Asp-214. The chain crosses the membrane as a helical span at residues Phe-264–Gly-284. Topologically, residues Thr-285 to Ala-308 are extracellular. A glycan (N-linked (GlcNAc...) asparagine) is linked at Asn-296. Residues Val-309–Phe-329 traverse the membrane as a helical segment. Residues Arg-330 to Ser-332 lie on the Cytoplasmic side of the membrane. The helical transmembrane segment at Gly-333–Pro-353 threads the bilayer. Over Arg-354 to Ala-356 the chain is Extracellular. A helical transmembrane segment spans residues Cys-357–Phe-377. Over Pro-378–Thr-393 the chain is Cytoplasmic. A helical membrane pass occupies residues Val-394–Leu-414. At Ala-415 to Lys-420 the chain is on the extracellular side. The chain crosses the membrane as a helical span at residues Ala-421–Val-441. At Tyr-442–His-467 the chain is on the cytoplasmic side. A helical transmembrane segment spans residues Trp-468–Ile-488. The Extracellular segment spans residues Lys-489–Ser-540. The disordered stretch occupies residues Gly-499–Ser-540. The span at Gly-502–Asn-530 shows a compositional bias: basic and acidic residues. A glycan (N-linked (GlcNAc...) asparagine) is linked at Asn-530.

The protein belongs to the MIP/aquaporin (TC 1.A.8) family.

The protein localises to the membrane. The enzyme catalyses H2O(in) = H2O(out). Functionally, water channel required to facilitate the transport of water across membranes. May play a role in the vegetative growth. The polypeptide is Aquaporin-5 (Botryotinia fuckeliana (strain B05.10) (Noble rot fungus)).